Reading from the N-terminus, the 61-residue chain is Large ribosomal subunit protein bL28 (61 aa).

This sequence belongs to the bacterial ribosomal protein bL28 family.

In Nautilia profundicola (strain ATCC BAA-1463 / DSM 18972 / AmH), this protein is Large ribosomal subunit protein bL28.